The chain runs to 197 residues: Nucleoside triphosphate pyrophosphatase (197 aa).

Residue D72 is the Proton acceptor of the active site.

The protein belongs to the Maf family. It depends on a divalent metal cation as a cofactor.

The protein localises to the cytoplasm. The catalysed reaction is a ribonucleoside 5'-triphosphate + H2O = a ribonucleoside 5'-phosphate + diphosphate + H(+). It catalyses the reaction a 2'-deoxyribonucleoside 5'-triphosphate + H2O = a 2'-deoxyribonucleoside 5'-phosphate + diphosphate + H(+). Functionally, nucleoside triphosphate pyrophosphatase. May have a dual role in cell division arrest and in preventing the incorporation of modified nucleotides into cellular nucleic acids. In Corynebacterium glutamicum (strain ATCC 13032 / DSM 20300 / JCM 1318 / BCRC 11384 / CCUG 27702 / LMG 3730 / NBRC 12168 / NCIMB 10025 / NRRL B-2784 / 534), this protein is Nucleoside triphosphate pyrophosphatase.